The chain runs to 636 residues: Beta-galactosidase-1-like protein 2 (636 aa).

An N-terminal signal peptide occupies residues 1–32; the sequence is MTTWSLRRRPARTLGLLLLVVLGFLVLRRLDW. Catalysis depends on Glu201, which acts as the Proton donor. Glu277 serves as the catalytic Nucleophile.

It belongs to the glycosyl hydrolase 35 family.

The protein resides in the secreted. This Homo sapiens (Human) protein is Beta-galactosidase-1-like protein 2 (GLB1L2).